Here is a 164-residue protein sequence, read N- to C-terminus: MEKVFERLMYASRWIMAPIYLGLSLILFALGVKFFQEIFHLLPNIFKIGEVDLVLLTLSLIDITLVGGLIVMVMFSGYENFVSQLDVGEDNDKLSWLGKMDAGSLKNKVAASIVAISSIHLLKVFMNAENISNDKIMWYLLIHITFVLSAFAMGYLDKITRTGK.

Transmembrane regions (helical) follow at residues 15–35, 53–73, 109–129, and 136–156; these read IMAP…VKFF, LVLL…IVMV, VAAS…MNAE, and IMWY…MGYL.

It belongs to the UPF0114 family.

Its subcellular location is the cell membrane. The protein is UPF0114 protein Sbal_0780 of Shewanella baltica (strain OS155 / ATCC BAA-1091).